The chain runs to 1298 residues: Phosphoribosylformylglycinamidine synthase (1298 aa).

The tract at residues 303-327 (FPGAATGSGGEIRDEGATGRGAKPK) is disordered. ATP contacts are provided by residues 305 to 316 (GAATGSGGEIRD), 384 to 386 (TGY), and A676. 4 residues coordinate Mg(2+): D677, E716, N720, and D884. S886 is an ATP binding site. One can recognise a Glutamine amidotransferase type-1 domain in the interval 1045–1298 (VAVLREQGVN…MFRNARAWVN (254 aa)). Catalysis depends on C1138, which acts as the Nucleophile. Active-site residues include H1263 and E1265.

It in the N-terminal section; belongs to the FGAMS family. In terms of assembly, monomer.

It is found in the cytoplasm. It catalyses the reaction N(2)-formyl-N(1)-(5-phospho-beta-D-ribosyl)glycinamide + L-glutamine + ATP + H2O = 2-formamido-N(1)-(5-O-phospho-beta-D-ribosyl)acetamidine + L-glutamate + ADP + phosphate + H(+). It participates in purine metabolism; IMP biosynthesis via de novo pathway; 5-amino-1-(5-phospho-D-ribosyl)imidazole from N(2)-formyl-N(1)-(5-phospho-D-ribosyl)glycinamide: step 1/2. Functionally, phosphoribosylformylglycinamidine synthase involved in the purines biosynthetic pathway. Catalyzes the ATP-dependent conversion of formylglycinamide ribonucleotide (FGAR) and glutamine to yield formylglycinamidine ribonucleotide (FGAM) and glutamate. The chain is Phosphoribosylformylglycinamidine synthase from Pseudomonas savastanoi pv. phaseolicola (strain 1448A / Race 6) (Pseudomonas syringae pv. phaseolicola (strain 1448A / Race 6)).